Here is a 377-residue protein sequence, read N- to C-terminus: MREKVVSLAQDLIHRSSISPNDEGCQKIIAERLEKLGFQIEWMPFNDTLNLWAKHGTSEPVIAFAGHTDVVPTGDENQWSSPPFSAEIIDGMLYGRGAADMKGSLAAMIVAAEEYVKANPNHKGIIALLITSDEEAAAKDGTIRVVETLMTRDEKITYCMVGEPSSAKNLGDVVKNGRRGSITGNLYIQGIQGHVAYPHLAENPIHKAALFLQELTTYQWDKGNEFFPPTSLQIANIHAGTGSNNVIPAELYIQFNLRYCTEVTDEIIKQKVAEMLEKHNLKYRIEWNLSGNPFLTKPGKLLDSITSAIEETIGITPKAETGGGTSDGRFIALMGAEVVEFGPLNSTIHKVNECVSVEDLGKCGEIYHKMLVNLLDS.

Residue His67 participates in Zn(2+) binding. The active site involves Asp69. Asp100 contributes to the Zn(2+) binding site. Residue Glu134 is the Proton acceptor of the active site. Zn(2+) contacts are provided by Glu135, Glu163, and His349.

It belongs to the peptidase M20A family. DapE subfamily. In terms of assembly, homodimer. Requires Zn(2+) as cofactor. It depends on Co(2+) as a cofactor.

The catalysed reaction is N-succinyl-(2S,6S)-2,6-diaminopimelate + H2O = (2S,6S)-2,6-diaminopimelate + succinate. The protein operates within amino-acid biosynthesis; L-lysine biosynthesis via DAP pathway; LL-2,6-diaminopimelate from (S)-tetrahydrodipicolinate (succinylase route): step 3/3. Catalyzes the hydrolysis of N-succinyl-L,L-diaminopimelic acid (SDAP), forming succinate and LL-2,6-diaminopimelate (DAP), an intermediate involved in the bacterial biosynthesis of lysine and meso-diaminopimelic acid, an essential component of bacterial cell walls. This Haemophilus influenzae (strain PittGG) protein is Succinyl-diaminopimelate desuccinylase.